A 563-amino-acid chain; its full sequence is ATP-dependent RNA helicase DeaD (563 aa).

The Q motif motif lies at 13–41; the sequence is ATFADLQIHPRVLRAIGDVGYESPTAIQA. The Helicase ATP-binding domain occupies 44-215; that stretch reads IPALMAGSDV…AKYLHDPFEV (172 aa). 57 to 64 contributes to the ATP binding site; sequence AQTGTGKT. Positions 163 to 166 match the DEAD box motif; it reads DEAD. The Helicase C-terminal domain occupies 226 to 385; that stretch reads NISQSYIQVA…AQLPTVEDVN (160 aa). 2 disordered regions span residues 441–470 and 543–563; these read LMAPDPPLSRRNRDQRRDRPQRPKRRPDLT and YRPPDAARRHNGGKPRRKHVG. The segment covering 451-461 has biased composition (basic and acidic residues); that stretch reads RNRDQRRDRPQ. The span at 551 to 563 shows a compositional bias: basic residues; it reads RHNGGKPRRKHVG.

This sequence belongs to the DEAD box helicase family. DeaD/CsdA subfamily.

Its subcellular location is the cytoplasm. It carries out the reaction ATP + H2O = ADP + phosphate + H(+). Its function is as follows. DEAD-box RNA helicase involved in various cellular processes at low temperature, including ribosome biogenesis, mRNA degradation and translation initiation. This chain is ATP-dependent RNA helicase DeaD, found in Mycobacterium tuberculosis (strain CDC 1551 / Oshkosh).